The chain runs to 503 residues: Glycerol kinase (503 aa).

Threonine 14 is an ADP binding site. Residues threonine 14, threonine 15, and serine 16 each coordinate ATP. Position 14 (threonine 14) interacts with sn-glycerol 3-phosphate. Arginine 18 is a binding site for ADP. Sn-glycerol 3-phosphate-binding residues include arginine 84, glutamate 85, tyrosine 136, and aspartate 246. Positions 84, 85, 136, 246, and 247 each coordinate glycerol. ADP is bound by residues threonine 268 and glycine 311. ATP-binding residues include threonine 268, glycine 311, glutamine 315, and glycine 412. Positions 412 and 416 each coordinate ADP.

Belongs to the FGGY kinase family.

It carries out the reaction glycerol + ATP = sn-glycerol 3-phosphate + ADP + H(+). The protein operates within polyol metabolism; glycerol degradation via glycerol kinase pathway; sn-glycerol 3-phosphate from glycerol: step 1/1. Inhibited by fructose 1,6-bisphosphate (FBP). Key enzyme in the regulation of glycerol uptake and metabolism. Catalyzes the phosphorylation of glycerol to yield sn-glycerol 3-phosphate. This chain is Glycerol kinase, found in Haemophilus influenzae (strain PittEE).